Here is a 31-residue protein sequence, read N- to C-terminus: PTEN upstream open reading frame MP31 (31 aa).

As to quaternary structure, interacts with lactate dehydrogenases LDHA and LDHB; interaction with mitochondrial LDH leads to inhibition of lactate dehydrogenase activity, preventing conversion of lactate to pyruvate. Expressed in brain (at protein level). Expressed at lower levels in glioblastomas than in normal brain tissue (at protein level).

Its subcellular location is the mitochondrion. Its function is as follows. Inhibits lactate dehydrogenase (LDH)-mediated conversion of lactate to pyruvate in mitochondria by competing with mitochondrial LDH for binding to NAD(+). Also inhibits cellular lactate utilization. This is PTEN upstream open reading frame MP31 from Homo sapiens (Human).